Reading from the N-terminus, the 154-residue chain is Histone H2B.v3 (154 aa).

Residues 1–11 (MVFVKGQKKAT) are compositionally biased toward basic residues. Positions 1-48 (MVFVKGQKKATKGSTQSGEEKTASTTPKVTKTPTEGGEKKRKKRKSDY) are disordered. Residues 12-27 (KGSTQSGEEKTASTTP) show a composition bias toward polar residues.

The protein belongs to the histone H2B family. The nucleosome is a histone octamer containing two molecules each of H2A, H2B, H3 and H4 assembled in one H3-H4 heterotetramer and two H2A-H2B heterodimers. The octamer wraps approximately 147 bp of DNA.

It localises to the nucleus. The protein resides in the chromosome. Functionally, core component of nucleosome which plays a central role in DNA double strand break (DSB) repair. Nucleosomes wrap and compact DNA into chromatin, limiting DNA accessibility to the cellular machineries which require DNA as a template. Histones thereby play a central role in transcription regulation, DNA repair, DNA replication and chromosomal stability. DNA accessibility is regulated via a complex set of post-translational modifications of histones, also called histone code, and nucleosome remodeling. In Dictyostelium discoideum (Social amoeba), this protein is Histone H2B.v3 (H2Bv3).